The sequence spans 276 residues: D-apionate oxidoisomerase (276 aa).

Residues Gly12–Met14, Glu33, and Asp69 contribute to the NAD(+) site. His114 and Glu184 together coordinate Zn(2+).

It belongs to the ApnO family. It depends on Zn(2+) as a cofactor.

The catalysed reaction is D-apionate + NAD(+) = 3-oxoisoapionate + NADH + H(+). The protein operates within carbohydrate metabolism. Functionally, involved in catabolism of D-apiose. Catalyzes the conversion of D-apionate to 3-oxo-isoapionate. In Cupriavidus necator (strain ATCC 43291 / DSM 13513 / CCUG 52238 / LMG 8453 / N-1) (Ralstonia eutropha), this protein is D-apionate oxidoisomerase.